Consider the following 212-residue polypeptide: Thymidylate kinase (212 aa).

11–18 (GPEGAGKT) provides a ligand contact to ATP.

The protein belongs to the thymidylate kinase family.

The enzyme catalyses dTMP + ATP = dTDP + ADP. Its function is as follows. Phosphorylation of dTMP to form dTDP in both de novo and salvage pathways of dTTP synthesis. This Streptococcus pneumoniae (strain P1031) protein is Thymidylate kinase.